A 222-amino-acid polypeptide reads, in one-letter code: Protein-L-isoaspartate O-methyltransferase (222 aa).

Ser69 is an active-site residue.

It belongs to the methyltransferase superfamily. L-isoaspartyl/D-aspartyl protein methyltransferase family.

It is found in the cytoplasm. It carries out the reaction [protein]-L-isoaspartate + S-adenosyl-L-methionine = [protein]-L-isoaspartate alpha-methyl ester + S-adenosyl-L-homocysteine. In terms of biological role, catalyzes the methyl esterification of L-isoaspartyl residues in peptides and proteins that result from spontaneous decomposition of normal L-aspartyl and L-asparaginyl residues. It plays a role in the repair and/or degradation of damaged proteins. This Nitrosomonas europaea (strain ATCC 19718 / CIP 103999 / KCTC 2705 / NBRC 14298) protein is Protein-L-isoaspartate O-methyltransferase.